Reading from the N-terminus, the 435-residue chain is Adenylosuccinate synthetase (435 aa).

GTP is bound by residues 11 to 17 and 39 to 41; these read GDEGKGK and GHT. Asp12 functions as the Proton acceptor in the catalytic mechanism. Mg(2+) contacts are provided by Asp12 and Gly39. IMP is bound by residues 12 to 15, 37 to 40, Thr134, Arg148, Asn230, Thr245, and Arg309; these read DEGK and NAGH. His40 functions as the Proton donor in the catalytic mechanism. 305–311 is a substrate binding site; the sequence is VTTGRKR. GTP is bound by residues Arg311, 337-339, and 419-421; these read KLD and GTG.

It belongs to the adenylosuccinate synthetase family. Homodimer. It depends on Mg(2+) as a cofactor.

It is found in the cytoplasm. The catalysed reaction is IMP + L-aspartate + GTP = N(6)-(1,2-dicarboxyethyl)-AMP + GDP + phosphate + 2 H(+). It participates in purine metabolism; AMP biosynthesis via de novo pathway; AMP from IMP: step 1/2. Its function is as follows. Plays an important role in the de novo pathway and in the salvage pathway of purine nucleotide biosynthesis. Catalyzes the first committed step in the biosynthesis of AMP from IMP. The protein is Adenylosuccinate synthetase of Zygosaccharomyces rouxii (strain ATCC 2623 / CBS 732 / NBRC 1130 / NCYC 568 / NRRL Y-229).